A 133-amino-acid polypeptide reads, in one-letter code: Profilin-2 (133 aa).

A disulfide bridge links C13 with C117. The Involved in PIP2 interaction motif lies at 83–99; sequence AVIRGKKGSGGITIKKT. T113 carries the post-translational modification Phosphothreonine.

This sequence belongs to the profilin family. Occurs in many kinds of cells as a complex with monomeric actin in a 1:1 ratio. In terms of processing, phosphorylated by MAP kinases.

It is found in the cytoplasm. The protein localises to the cytoskeleton. Its function is as follows. Binds to actin and affects the structure of the cytoskeleton. At high concentrations, profilin prevents the polymerization of actin, whereas it enhances it at low concentrations. This chain is Profilin-2, found in Corylus avellana (European hazel).